Consider the following 329-residue polypeptide: Ketol-acid reductoisomerase (NADP(+)) (329 aa).

Positions threonine 2–threonine 182 constitute a KARI N-terminal Rossmann domain. NADP(+)-binding positions include tyrosine 25–glutamine 28, serine 51, serine 53, and aspartate 83–glutamine 86. Histidine 108 is an active-site residue. Glycine 134 serves as a coordination point for NADP(+). The 146-residue stretch at asparagine 183–leucine 328 folds into the KARI C-terminal knotted domain. The Mg(2+) site is built by aspartate 191, glutamate 195, glutamate 227, and glutamate 231. Position 252 (serine 252) interacts with substrate.

It belongs to the ketol-acid reductoisomerase family. Mg(2+) is required as a cofactor.

The catalysed reaction is (2R)-2,3-dihydroxy-3-methylbutanoate + NADP(+) = (2S)-2-acetolactate + NADPH + H(+). The enzyme catalyses (2R,3R)-2,3-dihydroxy-3-methylpentanoate + NADP(+) = (S)-2-ethyl-2-hydroxy-3-oxobutanoate + NADPH + H(+). It participates in amino-acid biosynthesis; L-isoleucine biosynthesis; L-isoleucine from 2-oxobutanoate: step 2/4. It functions in the pathway amino-acid biosynthesis; L-valine biosynthesis; L-valine from pyruvate: step 2/4. In terms of biological role, involved in the biosynthesis of branched-chain amino acids (BCAA). Catalyzes an alkyl-migration followed by a ketol-acid reduction of (S)-2-acetolactate (S2AL) to yield (R)-2,3-dihydroxy-isovalerate. In the isomerase reaction, S2AL is rearranged via a Mg-dependent methyl migration to produce 3-hydroxy-3-methyl-2-ketobutyrate (HMKB). In the reductase reaction, this 2-ketoacid undergoes a metal-dependent reduction by NADPH to yield (R)-2,3-dihydroxy-isovalerate. This chain is Ketol-acid reductoisomerase (NADP(+)), found in Prochlorococcus marinus (strain MIT 9515).